Here is a 241-residue protein sequence, read N- to C-terminus: Large ribosomal subunit protein uL1 (241 aa).

The protein belongs to the universal ribosomal protein uL1 family. Part of the 50S ribosomal subunit.

Functionally, binds directly to 23S rRNA. The L1 stalk is quite mobile in the ribosome, and is involved in E site tRNA release. Its function is as follows. Protein L1 is also a translational repressor protein, it controls the translation of the L11 operon by binding to its mRNA. This is Large ribosomal subunit protein uL1 from Thermomicrobium roseum (strain ATCC 27502 / DSM 5159 / P-2).